Consider the following 298-residue polypeptide: Flavin-dependent thymidylate synthase (298 aa).

Residues 41–251 enclose the ThyX domain; the sequence is GFVRLVDYMG…PLTYAAFVEY (211 aa). Residues Thr-87, 110–112, and Glu-118 each bind FAD; that span reads RHR. Residues 107 to 110, 118 to 122, and Arg-190 contribute to the dUMP site; these read QWVR and EYSAR. The short motif at 110–120 is the ThyX motif element; sequence RHRTANVNEYS. FAD-binding positions include 206–208 and His-212; that span reads DLH. Arg-217 contributes to the dUMP binding site. Residue Arg-217 is the Involved in ionization of N3 of dUMP, leading to its activation of the active site.

Belongs to the thymidylate synthase ThyX family. In terms of assembly, homotetramer. FAD serves as cofactor.

The enzyme catalyses dUMP + (6R)-5,10-methylene-5,6,7,8-tetrahydrofolate + NADPH + H(+) = dTMP + (6S)-5,6,7,8-tetrahydrofolate + NADP(+). It participates in pyrimidine metabolism; dTTP biosynthesis. Its function is as follows. Catalyzes the reductive methylation of 2'-deoxyuridine-5'-monophosphate (dUMP) to 2'-deoxythymidine-5'-monophosphate (dTMP) while utilizing 5,10-methylenetetrahydrofolate (mTHF) as the methyl donor, and NADPH and FADH(2) as the reductant. The sequence is that of Flavin-dependent thymidylate synthase from Ehrlichia ruminantium (strain Welgevonden).